The following is a 303-amino-acid chain: Ribonuclease Z (303 aa).

His61, His63, Asp65, His66, His138, Asp206, and His265 together coordinate Zn(2+). Asp65 (proton acceptor) is an active-site residue.

It belongs to the RNase Z family. Homodimer. Requires Zn(2+) as cofactor.

The enzyme catalyses Endonucleolytic cleavage of RNA, removing extra 3' nucleotides from tRNA precursor, generating 3' termini of tRNAs. A 3'-hydroxy group is left at the tRNA terminus and a 5'-phosphoryl group is left at the trailer molecule.. In terms of biological role, zinc phosphodiesterase, which displays some tRNA 3'-processing endonuclease activity. Probably involved in tRNA maturation, by removing a 3'-trailer from precursor tRNA. This chain is Ribonuclease Z, found in Agathobacter rectalis (strain ATCC 33656 / DSM 3377 / JCM 17463 / KCTC 5835 / VPI 0990) (Eubacterium rectale).